We begin with the raw amino-acid sequence, 469 residues long: Bifunctional protein GlmU (469 aa).

Residues 1-237 (MTTNRKFAIA…SHEVLGVNTR (237 aa)) form a pyrophosphorylase region. UDP-N-acetyl-alpha-D-glucosamine is bound by residues 12-15 (LAAG), lysine 26, glutamine 78, 83-84 (GT), 105-107 (SGD), glycine 144, glutamate 162, asparagine 177, and asparagine 235. Position 107 (aspartate 107) interacts with Mg(2+). A Mg(2+)-binding site is contributed by asparagine 235. The segment at 238 to 258 (QDLASLDAHLRLQKCQQLMSA) is linker. Residues 259 to 469 (GVSIFKPETC…KKRAEQKKKK (211 aa)) are N-acetyltransferase. Positions 341 and 359 each coordinate UDP-N-acetyl-alpha-D-glucosamine. Catalysis depends on histidine 371, which acts as the Proton acceptor. Residues tyrosine 374 and asparagine 385 each contribute to the UDP-N-acetyl-alpha-D-glucosamine site. Acetyl-CoA is bound by residues alanine 388, 394–395 (NY), serine 413, alanine 431, and arginine 448.

The protein in the N-terminal section; belongs to the N-acetylglucosamine-1-phosphate uridyltransferase family. This sequence in the C-terminal section; belongs to the transferase hexapeptide repeat family. In terms of assembly, homotrimer. It depends on Mg(2+) as a cofactor.

It localises to the cytoplasm. The catalysed reaction is alpha-D-glucosamine 1-phosphate + acetyl-CoA = N-acetyl-alpha-D-glucosamine 1-phosphate + CoA + H(+). It carries out the reaction N-acetyl-alpha-D-glucosamine 1-phosphate + UTP + H(+) = UDP-N-acetyl-alpha-D-glucosamine + diphosphate. The protein operates within nucleotide-sugar biosynthesis; UDP-N-acetyl-alpha-D-glucosamine biosynthesis; N-acetyl-alpha-D-glucosamine 1-phosphate from alpha-D-glucosamine 6-phosphate (route II): step 2/2. Its pathway is nucleotide-sugar biosynthesis; UDP-N-acetyl-alpha-D-glucosamine biosynthesis; UDP-N-acetyl-alpha-D-glucosamine from N-acetyl-alpha-D-glucosamine 1-phosphate: step 1/1. It functions in the pathway bacterial outer membrane biogenesis; LPS lipid A biosynthesis. Functionally, catalyzes the last two sequential reactions in the de novo biosynthetic pathway for UDP-N-acetylglucosamine (UDP-GlcNAc). The C-terminal domain catalyzes the transfer of acetyl group from acetyl coenzyme A to glucosamine-1-phosphate (GlcN-1-P) to produce N-acetylglucosamine-1-phosphate (GlcNAc-1-P), which is converted into UDP-GlcNAc by the transfer of uridine 5-monophosphate (from uridine 5-triphosphate), a reaction catalyzed by the N-terminal domain. This is Bifunctional protein GlmU from Koribacter versatilis (strain Ellin345).